A 197-amino-acid polypeptide reads, in one-letter code: Superoxide dismutase [Fe] (197 aa).

His-26, His-75, Asp-157, and His-161 together coordinate Fe cation.

Belongs to the iron/manganese superoxide dismutase family. Homotetramer. Requires Fe cation as cofactor.

It carries out the reaction 2 superoxide + 2 H(+) = H2O2 + O2. Destroys superoxide anion radicals which are normally produced within the cells and which are toxic to biological systems. The polypeptide is Superoxide dismutase [Fe] (Cupriavidus metallidurans (strain ATCC 43123 / DSM 2839 / NBRC 102507 / CH34) (Ralstonia metallidurans)).